We begin with the raw amino-acid sequence, 133 residues long: Ribosome-binding factor A (133 aa).

It belongs to the RbfA family. In terms of assembly, monomer. Binds 30S ribosomal subunits, but not 50S ribosomal subunits or 70S ribosomes.

It is found in the cytoplasm. Functionally, one of several proteins that assist in the late maturation steps of the functional core of the 30S ribosomal subunit. Associates with free 30S ribosomal subunits (but not with 30S subunits that are part of 70S ribosomes or polysomes). Required for efficient processing of 16S rRNA. May interact with the 5'-terminal helix region of 16S rRNA. This is Ribosome-binding factor A from Alteromonas mediterranea (strain DSM 17117 / CIP 110805 / LMG 28347 / Deep ecotype).